Reading from the N-terminus, the 195-residue chain is Imidazoleglycerol-phosphate dehydratase (195 aa).

The protein belongs to the imidazoleglycerol-phosphate dehydratase family.

Its subcellular location is the cytoplasm. The enzyme catalyses D-erythro-1-(imidazol-4-yl)glycerol 3-phosphate = 3-(imidazol-4-yl)-2-oxopropyl phosphate + H2O. The protein operates within amino-acid biosynthesis; L-histidine biosynthesis; L-histidine from 5-phospho-alpha-D-ribose 1-diphosphate: step 6/9. In Geobacillus thermodenitrificans (strain NG80-2), this protein is Imidazoleglycerol-phosphate dehydratase.